Consider the following 999-residue polypeptide: Hypoxia up-regulated protein 1 (999 aa).

The first 32 residues, 1-32, serve as a signal peptide directing secretion; sequence MAATVRRQRPRRLLCWTLVAVLLADLLALSDT. 3 N-linked (GlcNAc...) asparagine glycosylation sites follow: asparagine 155, asparagine 222, and asparagine 515. The interval 564–694 is disordered; it reads VEDSPEEEST…KKQKPARKQK (131 aa). At serine 567 the chain carries Phosphoserine. A compositionally biased stretch (polar residues) spans 574 to 583; it reads LTKLGNTISS. Residue asparagine 596 is glycosylated (N-linked (GlcNAc...) asparagine). Basic and acidic residues-rich tracts occupy residues 611-626 and 641-670; these read GSKD…KEET and PKGD…EEKG. 3 N-linked (GlcNAc...) asparagine glycosylation sites follow: asparagine 830, asparagine 862, and asparagine 869. At lysine 883 the chain carries N6-acetyllysine. The disordered stretch occupies residues 909–999; that stretch reads AKFTKPRPRP…QKRSSKNDEL (91 aa). N-linked (GlcNAc...) asparagine glycosylation is found at asparagine 922 and asparagine 931. Over residues 949–962 the composition is skewed to basic and acidic residues; that stretch reads EEAKPILEPDKEET. The Prevents secretion from ER signature appears at 996 to 999; sequence NDEL.

It belongs to the heat shock protein 70 family. As to quaternary structure, part of a large chaperone multiprotein complex comprising DNAJB11, HSP90B1, HSPA5, HYOU, PDIA2, PDIA4, PDIA6, PPIB, SDF2L1, UGGT1 and very small amounts of ERP29, but not, or at very low levels, CALR nor CANX.

The protein resides in the endoplasmic reticulum lumen. Its function is as follows. Has a pivotal role in cytoprotective cellular mechanisms triggered by oxygen deprivation. Promotes HSPA5/BiP-mediated ATP nucleotide exchange and thereby activates the unfolded protein response (UPR) pathway in the presence of endoplasmic reticulum stress. May play a role as a molecular chaperone and participate in protein folding. The protein is Hypoxia up-regulated protein 1 (HYOU1) of Cricetulus griseus (Chinese hamster).